The chain runs to 159 residues: 2-C-methyl-D-erythritol 2,4-cyclodiphosphate synthase (159 aa).

Residues Asp8 and His10 each coordinate a divalent metal cation. Residues 8–10 and 34–35 contribute to the 4-CDP-2-C-methyl-D-erythritol 2-phosphate site; these read DVH and HS. His42 serves as a coordination point for a divalent metal cation. Residues 56–58, 61–65, 100–106, 132–135, Phe139, and Arg142 contribute to the 4-CDP-2-C-methyl-D-erythritol 2-phosphate site; these read DIG, FPDTD, AQAPKML, and TTTE.

Belongs to the IspF family. In terms of assembly, homotrimer. Requires a divalent metal cation as cofactor.

The catalysed reaction is 4-CDP-2-C-methyl-D-erythritol 2-phosphate = 2-C-methyl-D-erythritol 2,4-cyclic diphosphate + CMP. It functions in the pathway isoprenoid biosynthesis; isopentenyl diphosphate biosynthesis via DXP pathway; isopentenyl diphosphate from 1-deoxy-D-xylulose 5-phosphate: step 4/6. Functionally, involved in the biosynthesis of isopentenyl diphosphate (IPP) and dimethylallyl diphosphate (DMAPP), two major building blocks of isoprenoid compounds. Catalyzes the conversion of 4-diphosphocytidyl-2-C-methyl-D-erythritol 2-phosphate (CDP-ME2P) to 2-C-methyl-D-erythritol 2,4-cyclodiphosphate (ME-CPP) with a corresponding release of cytidine 5-monophosphate (CMP). This chain is 2-C-methyl-D-erythritol 2,4-cyclodiphosphate synthase, found in Salmonella typhi.